Here is an 839-residue protein sequence, read N- to C-terminus: Autophagy-related protein 9A (839 aa).

The tract at residues 1-21 is disordered; the sequence is MAQFDTEYQRLEASYSDSPPG. Ala-2 carries the post-translational modification N-acetylalanine. The Cytoplasmic segment spans residues 2–61; that stretch reads AQFDTEYQRLEASYSDSPPGEEDLLVHVPEGSKSPWHHIENLDLFFSRVYNLHQKNGFTC. The short motif at 8–11 is the Tyrosine-based sorting signal element; the sequence is YQRL. Ser-14, Ser-16, and Ser-18 each carry phosphoserine. The helical transmembrane segment at 62–84 threads the bilayer; it reads MLIGEIFELMQFLFVVAFTTFLV. Over 85–128 the chain is Lumenal; that stretch reads SCVDYDILFANKMVNHSLHPTEPVKVTLPDAFLPAQVCSARIQE. An N-linked (GlcNAc...) asparagine glycan is attached at Asn-99. Residues 129 to 154 traverse the membrane as a helical segment; that stretch reads NGSLITILVIAGVFWVHRLIKFIYNI. At 155-290 the chain is on the cytoplasmic side; it reads CCYWEIHSFY…ELAQRLSNRI (136 aa). The stretch at 291-301 is an intramembrane region; that stretch reads LWIGIANFLLC. The Cytoplasmic segment spans residues 302–319; sequence PLILIWQILYAFFSYAEV. The stretch at 320–328 is an intramembrane region; it reads LKREPGALG. The Cytoplasmic segment spans residues 329–371; sequence ARCWSLYGRCYLRHFNELEHELQSRLNRGYKPASKYMNCFLSP. A helical membrane pass occupies residues 372 to 397; it reads LLTLLAKNCAFFAGSILAVLIALTIY. Over 398-406 the chain is Lumenal; the sequence is DEDVLAVEH. The helical transmembrane segment at 407 to 424 threads the bilayer; the sequence is VLTTVTLLGVTVTVCRSF. Topologically, residues 425–470 are cytoplasmic; sequence IPDQHMVFCPEQLLRVILAHIHYMPDHWQGNAHRSQTRDEFAQLFQ. The stretch at 471 to 480 is an intramembrane region; that stretch reads YKAVFILEEL. The Cytoplasmic segment spans residues 481–483; sequence LSP. The stretch at 484 to 492 is an intramembrane region; it reads IVTPLILIF. Over 493–839 the chain is Cytoplasmic; the sequence is CLRPRALEII…DELPPQVHKV (347 aa). Residues Ser-656, Ser-735, Ser-738, Ser-741, and Ser-828 each carry the phosphoserine modification. Disordered regions lie at residues 656-688 and 719-839; these read SPLQ…GSSV and QQAQ…VHKV. Positions 724 to 736 are enriched in basic and acidic residues; the sequence is EPERHVWHRRESD. 2 stretches are compositionally biased toward acidic residues: residues 737-747 and 823-832; these read ESGESAPEEGG and VPEEGSEDEL.

This sequence belongs to the ATG9 family. Homotrimer; forms a homotrimer with a central pore that forms a path between the two membrane leaflets. Interacts (via cytoplasmic its C-terminus) with ATG2A. Interacts with SUPT20H. Interacts (via the tyrosine-based sorting signal motif) with AP4M1; promoting association with the AP-4 complex. Interacts with ARFIP1 and ARFIP2. Interacts with PI4K2A and PI4KB. Interacts with ATG4A; the interaction is direct and promotes ATG9A trafficking. Ufmylated in a DDRGK1 dependent manner.

Its subcellular location is the preautophagosomal structure membrane. It localises to the cytoplasmic vesicle. It is found in the autophagosome membrane. The protein resides in the golgi apparatus. The protein localises to the trans-Golgi network membrane. Its subcellular location is the late endosome membrane. It localises to the recycling endosome membrane. It is found in the endoplasmic reticulum membrane. The protein resides in the mitochondrion membrane. It catalyses the reaction a 1,2-diacyl-sn-glycero-3-phosphocholine(in) = a 1,2-diacyl-sn-glycero-3-phosphocholine(out). It carries out the reaction a 1,2-diacyl-sn-glycero-3-phospho-L-serine(in) = a 1,2-diacyl-sn-glycero-3-phospho-L-serine(out). The enzyme catalyses a 1,2-diacyl-sn-glycero-3-phosphoethanolamine(in) = a 1,2-diacyl-sn-glycero-3-phosphoethanolamine(out). Its function is as follows. Phospholipid scramblase involved in autophagy by mediating autophagosomal membrane expansion. Cycles between the preautophagosomal structure/phagophore assembly site (PAS) and the cytoplasmic vesicle pool and supplies membrane for the growing autophagosome. Lipid scramblase activity plays a key role in preautophagosomal structure/phagophore assembly by distributing the phospholipids that arrive through ATG2 (ATG2A or ATG2B) from the cytoplasmic to the luminal leaflet of the bilayer, thereby driving autophagosomal membrane expansion. Also required to supply phosphatidylinositol 4-phosphate to the autophagosome initiation site by recruiting the phosphatidylinositol 4-kinase beta (PI4KB) in a process dependent on ARFIP2, but not ARFIP1. In addition to autophagy, also plays a role in necrotic cell death. The polypeptide is Autophagy-related protein 9A (Bos taurus (Bovine)).